The primary structure comprises 355 residues: Methionine import ATP-binding protein MetN 1 (355 aa).

The region spanning Ile-6 to Val-245 is the ABC transporter domain. Residue Gly-42–Ser-49 coordinates ATP.

This sequence belongs to the ABC transporter superfamily. Methionine importer (TC 3.A.1.24) family. In terms of assembly, the complex is composed of two ATP-binding proteins (MetN), two transmembrane proteins (MetI) and a solute-binding protein (MetQ).

It is found in the cell membrane. The catalysed reaction is L-methionine(out) + ATP + H2O = L-methionine(in) + ADP + phosphate + H(+). The enzyme catalyses D-methionine(out) + ATP + H2O = D-methionine(in) + ADP + phosphate + H(+). Its function is as follows. Part of the ABC transporter complex MetNIQ involved in methionine import. Responsible for energy coupling to the transport system. In Lactiplantibacillus plantarum (strain ATCC BAA-793 / NCIMB 8826 / WCFS1) (Lactobacillus plantarum), this protein is Methionine import ATP-binding protein MetN 1.